A 444-amino-acid polypeptide reads, in one-letter code: Tol-Pal system protein TolB (444 aa).

The N-terminal stretch at 1 to 19 is a signal peptide; that stretch reads MRNIIYFILSLLFSFKGYA.

It belongs to the TolB family. The Tol-Pal system is composed of five core proteins: the inner membrane proteins TolA, TolQ and TolR, the periplasmic protein TolB and the outer membrane protein Pal. They form a network linking the inner and outer membranes and the peptidoglycan layer.

Its subcellular location is the periplasm. Functionally, part of the Tol-Pal system, which plays a role in outer membrane invagination during cell division and is important for maintaining outer membrane integrity. The sequence is that of Tol-Pal system protein TolB from Rickettsia felis (strain ATCC VR-1525 / URRWXCal2) (Rickettsia azadi).